Consider the following 150-residue polypeptide: Transcriptional repressor NrdR (150 aa).

Residues 3 to 34 (CPFCAFADSKVVDSRPDKGGSTIRRRRECESC) fold into a zinc finger. One can recognise an ATP-cone domain in the interval 49 to 139 (PLVIKKDGRR…VYRSFKDITE (91 aa)).

This sequence belongs to the NrdR family. It depends on Zn(2+) as a cofactor.

Its function is as follows. Negatively regulates transcription of bacterial ribonucleotide reductase nrd genes and operons by binding to NrdR-boxes. The protein is Transcriptional repressor NrdR of Geotalea uraniireducens (strain Rf4) (Geobacter uraniireducens).